We begin with the raw amino-acid sequence, 432 residues long: Cyclic GMP-AMP synthase (432 aa).

Residue 110–115 (QGSFQY) coordinates GTP. 2 residues coordinate Mg(2+): Asp-129 and Asp-131. Residue Arg-180 coordinates ATP. Asp-191 is a binding site for Mg(2+). ATP is bound at residue Ser-255. Positions 283, 297, and 344 each coordinate GTP. Residues 413–432 (LNAPSKEPSSKPINKTMVSG) form a disordered region. The span at 423 to 432 (KPINKTMVSG) shows a compositional bias: polar residues.

It belongs to the CD-NTase family. A01 subfamily. The cofactor is Mg(2+).

The catalysed reaction is GTP + ATP = 3',3'-cGAMP + 2 diphosphate. Its function is as follows. Cyclic nucleotide synthase (second messenger synthase) of a CBASS antivirus system. CBASS (cyclic oligonucleotide-based antiphage signaling system) provides immunity against bacteriophage. The CD-NTase protein synthesizes cyclic nucleotides in response to infection; these serve as specific second messenger signals. The signals activate a diverse range of effectors, leading to bacterial cell death and thus abortive phage infection. A type II-C(GA) CBASS system. Functionally, catalyzes the synthesis of 3'3'-cyclic GMP-AMP (3'3'-cGAMP) from GTP and ATP, a second messenger in cell signal transduction. Is also able to produce c-di-AMP and c-di-GMP from ATP and GTP, respectively; however, 3'3'-cGAMP is the dominant molecule produced by DncV in vivo, contrary to the 2'3'-cGAMP produced by eukaryotes. By producing cGAMP, down-regulates csgD expression and expression of flagellum regulon genes, which leads to the down-regulation of rdar biofilm formation and flagellum-mediated swimming and swarming motility in a temperature-dependent manner. Controls the activity of cGAMP-activated phospholipase CapV, a patatin-like lipase that is a direct 3',3'-cGAMP receptor encoded in the dncV operon. This is Cyclic GMP-AMP synthase from Escherichia coli.